The primary structure comprises 126 residues: Small ribosomal subunit protein uS8 (126 aa).

The protein belongs to the universal ribosomal protein uS8 family. Part of the 30S ribosomal subunit. Contacts proteins S5 and S12.

Functionally, one of the primary rRNA binding proteins, it binds directly to 16S rRNA central domain where it helps coordinate assembly of the platform of the 30S subunit. The polypeptide is Small ribosomal subunit protein uS8 (Nitratidesulfovibrio vulgaris (strain ATCC 29579 / DSM 644 / CCUG 34227 / NCIMB 8303 / VKM B-1760 / Hildenborough) (Desulfovibrio vulgaris)).